Reading from the N-terminus, the 20-residue chain is Cytochrome c oxidase subunit 8B, mitochondrial (20 aa).

Belongs to the cytochrome c oxidase VIII family. Component of the cytochrome c oxidase (complex IV, CIV), a multisubunit enzyme composed of 14 subunits. The complex is composed of a catalytic core of 3 subunits MT-CO1, MT-CO2 and MT-CO3, encoded in the mitochondrial DNA, and 11 supernumerary subunits COX4I, COX5A, COX5B, COX6A, COX6B, COX6C, COX7A, COX7B, COX7C, COX8 and NDUFA4, which are encoded in the nuclear genome. The complex exists as a monomer or a dimer and forms supercomplexes (SCs) in the inner mitochondrial membrane with NADH-ubiquinone oxidoreductase (complex I, CI) and ubiquinol-cytochrome c oxidoreductase (cytochrome b-c1 complex, complex III, CIII), resulting in different assemblies (supercomplex SCI(1)III(2)IV(1) and megacomplex MCI(2)III(2)IV(2)).

The protein localises to the mitochondrion inner membrane. Its pathway is energy metabolism; oxidative phosphorylation. In terms of biological role, component of the cytochrome c oxidase, the last enzyme in the mitochondrial electron transport chain which drives oxidative phosphorylation. The respiratory chain contains 3 multisubunit complexes succinate dehydrogenase (complex II, CII), ubiquinol-cytochrome c oxidoreductase (cytochrome b-c1 complex, complex III, CIII) and cytochrome c oxidase (complex IV, CIV), that cooperate to transfer electrons derived from NADH and succinate to molecular oxygen, creating an electrochemical gradient over the inner membrane that drives transmembrane transport and the ATP synthase. Cytochrome c oxidase is the component of the respiratory chain that catalyzes the reduction of oxygen to water. Electrons originating from reduced cytochrome c in the intermembrane space (IMS) are transferred via the dinuclear copper A center (CU(A)) of subunit 2 and heme A of subunit 1 to the active site in subunit 1, a binuclear center (BNC) formed by heme A3 and copper B (CU(B)). The BNC reduces molecular oxygen to 2 water molecules using 4 electrons from cytochrome c in the IMS and 4 protons from the mitochondrial matrix. The sequence is that of Cytochrome c oxidase subunit 8B, mitochondrial from Thunnus obesus (Bigeye tuna).